The primary structure comprises 234 residues: N-acetyl-alpha-D-glucosaminyl L-malate deacetylase 1 (234 aa).

Zn(2+) is bound by residues H12, D15, and H113.

The protein belongs to the PIGL family. Requires Zn(2+) as cofactor.

It carries out the reaction (S)-malyl N-acetyl-alpha-D-glucosaminide + H2O = (S)-malyl alpha-D-glucosaminide + acetate. Its activity is regulated as follows. Inhibited by BSH. Functionally, involved in bacillithiol (BSH) biosynthesis. Catalyzes the second step of the pathway, the deacetylation of N-acetylglucosaminylmalate (GlcNAc-Mal) to glucosamine malate (GlcN-Mal). The chain is N-acetyl-alpha-D-glucosaminyl L-malate deacetylase 1 from Bacillus anthracis.